Reading from the N-terminus, the 76-residue chain is DNA-binding protein S1FA2 (76 aa).

The short motif at 50–55 (PPRKKK) is the Nuclear localization signal element. The segment covering 51–66 (PRKKKPLSKKKLKREK) has biased composition (basic residues). The segment at 51-76 (PRKKKPLSKKKLKREKLKQGVPVPGE) is disordered.

The protein belongs to the S1FA transcription factor family.

It localises to the nucleus. DNA-binding protein that specifically recognizes a negative element (S1F) within the RPS1 promoter. This chain is DNA-binding protein S1FA2 (S1FA2), found in Arabidopsis thaliana (Mouse-ear cress).